Reading from the N-terminus, the 1482-residue chain is Chromosome partition protein MukB (1482 aa).

Position 34-41 (34-41 (GGNGAGKS)) interacts with ATP. Coiled coils occupy residues 326–472 (LEAD…QTAH), 507–602 (NQRH…RRAP), 780–805 (RAAR…ATLS), 832–1110 (DDPE…REQV), and 1209–1265 (VEAI…LQSV). The tract at residues 666–783 (PGGSEDPRLN…SLPLFGRAAR (118 aa)) is flexible hinge.

This sequence belongs to the SMC family. MukB subfamily. Homodimerization via its hinge domain. Binds to DNA via its C-terminal region. Interacts, and probably forms a ternary complex, with MukE and MukF via its C-terminal region. The complex formation is stimulated by calcium or magnesium. Interacts with tubulin-related protein FtsZ.

It is found in the cytoplasm. The protein localises to the nucleoid. Its function is as follows. Plays a central role in chromosome condensation, segregation and cell cycle progression. Functions as a homodimer, which is essential for chromosome partition. Involved in negative DNA supercoiling in vivo, and by this means organize and compact chromosomes. May achieve or facilitate chromosome segregation by condensation DNA from both sides of a centrally located replisome during cell division. This chain is Chromosome partition protein MukB, found in Klebsiella pneumoniae subsp. pneumoniae (strain ATCC 700721 / MGH 78578).